We begin with the raw amino-acid sequence, 231 residues long: MNRYVSVLALSGIAVLAGCVAPTPKPNDPYYAPVLPRTPLPAAANNGSIYQAGFEQNLYSDRKAFRVGDIITITLNEKTQASKNANSQVGKTSKTGIGLTSLFGAVPNTNNPLGDGDLSLSAGYSGDRATNGKSSAGQGNSLTGSITVTVADVLPNGIIAVRGEKWMTLNTGDELVRIAGMVRADDISTDNTVPSTRIADARITYSGTGSFADASQPGWFDRFFLSPLFPF.

The first 18 residues, 1-18 (MNRYVSVLALSGIAVLAG), serve as a signal peptide directing secretion. C19 carries the N-palmitoyl cysteine lipid modification. Residue C19 is the site of S-diacylglycerol cysteine attachment.

Belongs to the FlgH family. As to quaternary structure, the basal body constitutes a major portion of the flagellar organelle and consists of four rings (L,P,S, and M) mounted on a central rod.

It is found in the cell outer membrane. The protein resides in the bacterial flagellum basal body. Assembles around the rod to form the L-ring and probably protects the motor/basal body from shearing forces during rotation. In Pseudomonas fluorescens (strain SBW25), this protein is Flagellar L-ring protein.